The sequence spans 473 residues: Fumarate hydratase class II (473 aa).

Substrate contacts are provided by residues 105–107, 130–133, 140–142, and Thr188; these read SGT, HPND, and SSN. Residue His189 is the Proton donor/acceptor of the active site. Ser319 is an active-site residue. Residues Ser320 and 325-327 contribute to the substrate site; that span reads KVN.

Belongs to the class-II fumarase/aspartase family. Fumarase subfamily. In terms of assembly, homotetramer.

The protein localises to the cytoplasm. The enzyme catalyses (S)-malate = fumarate + H2O. It functions in the pathway carbohydrate metabolism; tricarboxylic acid cycle; (S)-malate from fumarate: step 1/1. In terms of biological role, involved in the TCA cycle. Catalyzes the stereospecific interconversion of fumarate to L-malate. The sequence is that of Fumarate hydratase class II from Xylella fastidiosa (strain Temecula1 / ATCC 700964).